A 637-amino-acid polypeptide reads, in one-letter code: tRNA uridine 5-carboxymethylaminomethyl modification enzyme MnmG (637 aa).

Position 14-19 (G14–G19) interacts with FAD. NAD(+) is bound at residue G279–F293.

The protein belongs to the MnmG family. As to quaternary structure, homodimer. Heterotetramer of two MnmE and two MnmG subunits. FAD serves as cofactor.

It is found in the cytoplasm. Functionally, NAD-binding protein involved in the addition of a carboxymethylaminomethyl (cmnm) group at the wobble position (U34) of certain tRNAs, forming tRNA-cmnm(5)s(2)U34. The protein is tRNA uridine 5-carboxymethylaminomethyl modification enzyme MnmG of Desulfitobacterium hafniense (strain Y51).